Consider the following 35-residue polypeptide: Z-limacoditoxin(1)-Dv1 (35 aa).

The N-terminal stretch at 1–22 is a signal peptide; sequence MKKTFLPIFLVILLASYALANP. A Pyrrolidone carboxylic acid modification is found at Gln-23. Residue Pro-32 is modified to Proline amide.

The protein belongs to the limacoditoxin-1 (ACP-like) family. Expressed by the venom secretory cell of the spine. The spine is a cuticular structure containing a single large nucleated venom-secreting cell at its base. It is an independent unit capable of producing, storing and injecting venom. On the back of D.vulnerans caterpillars, spines are grouped together by 50 to 100 to form scoli, of which there are eight in D.vulnerans.

It is found in the secreted. In terms of biological role, potently activates insect G protein-coupled receptor. It activates the ACP receptor (ACPR) from the mosquito A.aegypti (EC(50)=0.55 nM) with a potency comparable to that of the endogenous ligand. Has no activity on receptors of the closely related neuropeptides adipokinetic hormone and corazonin. In vivo, does not reveal any observable effects when injected into crickets (A.domesticus). Does not induce increase in intracellular calcium in mouse DRG neurons, suggesting that it does not induce pain. This Doratifera vulnerans (Mottled cup moth) protein is Z-limacoditoxin(1)-Dv1.